Here is a 642-residue protein sequence, read N- to C-terminus: Cysteine-rich receptor-like protein kinase 27 (642 aa).

The first 24 residues, 1-24 (MASTSIMLSSFFSFFFLTFFVTYA), serve as a signal peptide directing secretion. The Extracellular portion of the chain corresponds to 25–274 (QQNVTVHTIC…QGKSKDRSKT (250 aa)). Asn27, Asn40, Asn44, Asn70, Asn145, Asn173, and Asn258 each carry an N-linked (GlcNAc...) asparagine glycan. 2 consecutive Gnk2-homologous domains span residues 29–130 (TVHT…SRII) and 136–240 (PVPF…VYPF). A helical membrane pass occupies residues 275–295 (LIFAVVPIVAIILGLVFLFIY). Over 296–642 (LKRRRKKKTL…DVSLTDLSAR (347 aa)) the chain is Cytoplasmic. Positions 333–620 (FSLTNKIGEG…QLPKPSQPGF (288 aa)) constitute a Protein kinase domain. ATP-binding positions include 339-347 (IGEGGFGVV) and Lys361. Position 406 is a phosphotyrosine (Tyr406). Asp458 (proton acceptor) is an active-site residue. At Ser462 the chain carries Phosphoserine. At Thr498 the chain carries Phosphothreonine. The residue at position 506 (Tyr506) is a Phosphotyrosine.

This sequence belongs to the protein kinase superfamily. Ser/Thr protein kinase family. CRK subfamily.

The protein resides in the membrane. It carries out the reaction L-seryl-[protein] + ATP = O-phospho-L-seryl-[protein] + ADP + H(+). The enzyme catalyses L-threonyl-[protein] + ATP = O-phospho-L-threonyl-[protein] + ADP + H(+). This is Cysteine-rich receptor-like protein kinase 27 (CRK27) from Arabidopsis thaliana (Mouse-ear cress).